The following is a 60-amino-acid chain: Large ribosomal subunit protein bL32 (60 aa).

Disordered regions lie at residues 1-22 (MAVQQNKKSPSKRGMHRSHNAL) and 34-60 (GETHLRHHISPNGFYRGRQVLKNKSEA). A compositionally biased stretch (basic residues) spans 9–19 (SPSKRGMHRSH).

Belongs to the bacterial ribosomal protein bL32 family.

This Variovorax paradoxus (strain S110) protein is Large ribosomal subunit protein bL32.